The primary structure comprises 221 residues: Anti-sigma-W factor RsiW (221 aa).

Over 1–87 (MKTCHSHDEL…AKWKLKAKRH (87 aa)) the chain is Cytoplasmic. Zn(2+) is bound by residues H30, C34, and C37. The chain crosses the membrane as a helical span at residues 88-108 (PILVAAAIFLIMMSAAFFSAW). The Extracellular segment spans residues 109–221 (SHTTDGIAVS…GEDDPHSTDN (113 aa)).

The protein belongs to the zinc-associated anti-sigma factor (ZAS) superfamily. Anti-sigma-W factor family. Zn(2+) serves as cofactor. Post-translationally, is processed by three successive proteolytic events. First, the extracellular region of RsiW is cleaved by PrsW (Site-1 cleavage) in response to cell envelope stresses. Next, it undergoes cleavage at an intramembrane site (Site-2 cleavage) mediated by RasP. This cleavage uncovers a cryptic proteolytic tag with conserved alanine residues in the transmembrane segment, that is recognized mainly by the ClpXP protease, which completely degrades the protein in the cytoplasm and leads to the induction of the sigma-W-controlled genes.

The protein resides in the membrane. Functionally, is the anti-sigma factor for SigW. The presence of RsiW leads to the inactivation of SigW, and its proteolytic destruction to sigma-W activation. In Shouchella clausii (strain KSM-K16) (Alkalihalobacillus clausii), this protein is Anti-sigma-W factor RsiW (rsiW).